Consider the following 126-residue polypeptide: Fatty acid-binding protein, liver (126 aa).

Residue A2 is modified to N-acetylalanine.

Belongs to the calycin superfamily. Fatty-acid binding protein (FABP) family. Liver.

It localises to the cytoplasm. Binds free fatty acids and their coenzyme A derivatives, bilirubin, and some other small molecules in the cytoplasm. May be involved in intracellular lipid transport this L-FABP binds only one fatty acid/molecule. Has more affinity for trans-parinaric acid than for cis-parinaric acid. The chain is Fatty acid-binding protein, liver (fabp1) from Rhamdia sapo (South American catfish).